The sequence spans 161 residues: Vitamin K epoxide reductase complex subunit 1 (161 aa).

Topologically, residues 1–9 (MGTTWRSPG) are cytoplasmic. A helical membrane pass occupies residues 10 to 29 (LVRLALCLAGLALSLYALHV). Topologically, residues 30–80 (KAARARDENYRALCDVGTAISCSRVFSSRWGRGFGLVEHMLGADSVLNQSN) are lumenal. An intrachain disulfide couples cysteine 43 to cysteine 51. Asparagine 80 lines the (S)-warfarin pocket. The chain crosses the membrane as a helical span at residues 81 to 95 (SIFGCLFYTLQLLLG). At 96–100 (CLRGR) the chain is on the cytoplasmic side. A helical transmembrane segment spans residues 101–128 (WASILLVLSSLVSVAGSVYLAWILFFVL). Topologically, residues 129–131 (YDF) are lumenal. A disulfide bond links cysteine 132 and cysteine 135. A helical membrane pass occupies residues 132–153 (CIVCITTYAINVGLMLLSFQKV). 2 residues coordinate phylloquinone: cysteine 135 and tyrosine 139. Tyrosine 139 provides a ligand contact to (S)-warfarin. The Cytoplasmic segment spans residues 154–161 (PEHKTKKH).

It belongs to the VKOR family. In terms of tissue distribution, detected in liver.

Its subcellular location is the endoplasmic reticulum membrane. It catalyses the reaction phylloquinone + [protein]-disulfide + H2O = 2,3-epoxyphylloquinone + [protein]-dithiol. The enzyme catalyses phylloquinol + [protein]-disulfide = phylloquinone + [protein]-dithiol. With respect to regulation, inhibited by warfarin (coumadin). Warfarin locks VKORC1 in both redox states into the closed conformation. In terms of biological role, involved in vitamin K metabolism. Catalytic subunit of the vitamin K epoxide reductase (VKOR) complex which reduces inactive vitamin K 2,3-epoxide to active vitamin K. Vitamin K is required for the gamma-carboxylation of various proteins, including clotting factors, and is required for normal blood coagulation, but also for normal bone development. The protein is Vitamin K epoxide reductase complex subunit 1 (Vkorc1) of Mus musculus (Mouse).